The chain runs to 595 residues: O-phosphoseryl-tRNA(Sec) selenium transferase (595 aa).

Arg75 is a binding site for pyridoxal 5'-phosphate. The tract at residues Gly96–Pro106 is phosphate loop (P-loop). Substrate is bound by residues Arg97, Ser98, and Gln105. Residues Arg174–Ala187 are compositionally biased toward polar residues. 2 disordered regions span residues Arg174–Pro208 and Ser257–Ser278. Basic and acidic residues predominate over residues Glu196–Thr205. Arg358 is a tRNA binding site. At Lys371 the chain carries N6-(pyridoxal phosphate)lysine. Residue Arg400 coordinates substrate.

This sequence belongs to the SepSecS family. As to quaternary structure, homotetramer composed of two homodimers. The cofactor is pyridoxal 5'-phosphate.

It localises to the cytoplasm. The enzyme catalyses O-phospho-L-seryl-tRNA(Sec) + selenophosphate + H2O = L-selenocysteinyl-tRNA(Sec) + 2 phosphate. It participates in aminoacyl-tRNA biosynthesis; selenocysteinyl-tRNA(Sec) biosynthesis; selenocysteinyl-tRNA(Sec) from L-seryl-tRNA(Sec) (archaeal/eukaryal route): step 2/2. In terms of biological role, converts O-phosphoseryl-tRNA(Sec) to selenocysteinyl-tRNA(Sec) required for selenoprotein biosynthesis. This is O-phosphoseryl-tRNA(Sec) selenium transferase from Leishmania donovani.